Consider the following 435-residue polypeptide: MTWRVAVLLSLVLGAGAVHIGVDDPEDGGKHWVVIVAGSNGWYNYRHQADACHAYQIIHRNGIPDEQIIVMMYDDIANNEENPTPGVVINRPNGTDVYKGVPKDYTGEDVTPENFLAVLRGDEEAVKGKGSGKVLKSGPRDHVFVYFTDHGATGILVFPNEDLHVKDLNKTIRYMYEHKMYQKMVFYIEACESGSMMNHLPDDIDVYATTAANPNESSYACYYDEERSTYLGDWYSVNWMEDSDVEDLTKETLHKQYHLVKSHTNTSHVMQYGNKSISTMKVMQFQGMKHRASSPISLPPVTHLDLTPSPDVPLTILKRKLLRTNNMKESQVLVGQIQHLLDARHIIEKSVQKIVSLLAGFGETAQKHLSERAMLTAHDCHQEAVTHFRTHCFNWHSVTYEHALRYLYVLANLCEKPYPIDRIKMAMDKVCLSHY.

A signal peptide spans 1–17 (MTWRVAVLLSLVLGAGA). A glycan (N-linked (GlcNAc...) asparagine) is linked at Asn-93. His-150 is a catalytic residue. N-linked (GlcNAc...) asparagine glycosylation occurs at Asn-169. The active-site Nucleophile is Cys-191. Residues Asn-215, Asn-265, and Asn-274 are each glycosylated (N-linked (GlcNAc...) asparagine). Positions 326–435 (NMKESQVLVG…AMDKVCLSHY (110 aa)) are excised as a propeptide. Disulfide bonds link Cys-380–Cys-414 and Cys-392–Cys-431.

Belongs to the peptidase C13 family. As to quaternary structure, homodimer before autocatalytic removal of the propeptide. Monomer after autocatalytic processing. May interact with integrins. Activated by autocatalytic processing at pH 4. Detected in kidney cortex (at protein level).

It is found in the lysosome. The enzyme catalyses Hydrolysis of proteins and small molecule substrates at -Asn-|-Xaa- bonds.. In terms of biological role, has a strict specificity for hydrolysis of asparaginyl bonds. Can also cleave aspartyl bonds slowly, especially under acidic conditions. Involved in the processing of proteins for MHC class II antigen presentation in the lysosomal/endosomal system. Also involved in MHC class I antigen presentation in cross-presenting dendritic cells by mediating cleavage and maturation of Perforin-2 (MPEG1), thereby promoting antigen translocation in the cytosol. Required for normal lysosomal protein degradation in renal proximal tubules. Required for normal degradation of internalized EGFR. Plays a role in the regulation of cell proliferation via its role in EGFR degradation. The polypeptide is Legumain (Lgmn) (Rattus norvegicus (Rat)).